Consider the following 73-residue polypeptide: Kazal peptide Pr13a (73 aa).

The signal sequence occupies residues 1-20 (MKYIILFLVLIGLQANLALG). The region spanning 21 to 73 (SKCKCDCTKYPYSPVCAKELKTGDTETFNNVCQLQCYNCTHMKNYVVIYSGSC) is the Kazal-like domain. Disulfide bonds link C23–C59, C27–C52, and C36–C73.

Expressed by the venom gland (anterior main gland) (at protein level).

The protein localises to the secreted. May act as a serine protease inhibitor, since it possess the kazal serine protease inhibitor signature. The protein is Kazal peptide Pr13a of Platymeris rhadamanthus (Red spot assassin bug).